A 333-amino-acid polypeptide reads, in one-letter code: NAC domain-containing protein 26 (333 aa).

One can recognise an NAC domain in the interval 14–173; the sequence is LPPGFRFHPT…DWAVCRIFHK (160 aa). Residues 114–179 mediate DNA binding; it reads IGMKKTLVFY…IFHKSSGIKK (66 aa). The tract at residues 143 to 162 is disordered; it reads ADASPPQPPPPPSSAEPPRQ. Positions 147-157 are enriched in pro residues; the sequence is PPQPPPPPSSA.

Forms homodimers. Forms heterodimers with NAC20. Forms heterodimers with NAC23. In terms of tissue distribution, expressed in developing seeds.

The protein localises to the nucleus. In terms of biological role, transcription factor that acts redundantly with NAC20 to regulate the expression of genes involved in the biosynthesis of starch and storage proteins in grain. Directly binds to the promoters of starch synthase 1 (SS1), pullulanase (PUL), glutelin A1 (GLUA1), glutelins B4 and B5 (GLUB4 and GLUB5), alpha-globulin and 16 kDa prolamin, and activates their expression. Possesses transactivation activity in yeast. This Oryza sativa subsp. indica (Rice) protein is NAC domain-containing protein 26.